The following is a 437-amino-acid chain: MEGVLSSLLASSLIVGFPSLIFVCSILIYYYLCVMKKKISSKDSLPPVIGVYIMRCIYSITQYWEMIIPQIKLYRISNDYIVFQCLSVVFTLKVMDYLKDGPKTIRELSQLTKSSEKNLFRVMRALTQEHIFNYNQSNQTFSLNSCSKLLTSPPPPSSSPFEQNGILSTNDEELGCIFSMLSYPTFIDAWRSLKECIESGVSGFQAKHGMTFFQYIDEKDTYIKKIFDSAMRQSYATKIHTQIINGYDFSKYKKVCDIGGGIGFLGFEIVNHNANTCVCVLELEETVRNGLEQSKVDEKKQRIIEEQRLVFKTGNMFIPRSIPSANLYIMMQVIHDWNNNDAIKILSSVASTMRMERNHTGQSPKLLIIDSILDDNINNDTYKRSCIPDIIMMAIVGGEERTLSQWGHIIKESGLQVLTIKKFNRPPFLSLIELTIQ.

The S-adenosyl-L-methionine site is built by G259, E282, N315, and M316. H335 functions as the Proton acceptor in the catalytic mechanism.

The protein belongs to the class I-like SAM-binding methyltransferase superfamily. Cation-independent O-methyltransferase family. COMT subfamily.

The catalysed reaction is (3,5-dichloro-2,4,6-trihydroxyphenyl)hexan-1-one + S-adenosyl-L-methionine = 1-(3,5-dichloro-2,6-dihydroxy-4-methoxyphenyl)hexan-1-one + S-adenosyl-L-homocysteine + H(+). The protein is O-methyltransferase 10 (omt10) of Dictyostelium discoideum (Social amoeba).